Here is a 172-residue protein sequence, read N- to C-terminus: Small ribosomal subunit protein uS5 (172 aa).

The S5 DRBM domain maps to 17-80 (MREKMIAVNR…EEARRKMIKV (64 aa)).

This sequence belongs to the universal ribosomal protein uS5 family. Part of the 30S ribosomal subunit. Contacts proteins S4 and S8.

Functionally, with S4 and S12 plays an important role in translational accuracy. Located at the back of the 30S subunit body where it stabilizes the conformation of the head with respect to the body. This is Small ribosomal subunit protein uS5 from Herminiimonas arsenicoxydans.